Consider the following 185-residue polypeptide: Ubiquitin-conjugating enzyme E2 5 (185 aa).

The UBC core domain maps to 1-148 (MSSPSKRREM…VKEYCEKYAK (148 aa)). The active-site Glycyl thioester intermediate is the Cys85. The interval 146 to 185 (YAKPRADTEEMSSDDEMSEDEYASDGDDEDDVAIAGKLDP) is disordered. Residues 154–177 (EEMSSDDEMSEDEYASDGDDEDDV) show a composition bias toward acidic residues.

Belongs to the ubiquitin-conjugating enzyme family. As to expression, expressed in developing ovules, but not in vascular tissues.

The catalysed reaction is S-ubiquitinyl-[E1 ubiquitin-activating enzyme]-L-cysteine + [E2 ubiquitin-conjugating enzyme]-L-cysteine = [E1 ubiquitin-activating enzyme]-L-cysteine + S-ubiquitinyl-[E2 ubiquitin-conjugating enzyme]-L-cysteine.. It participates in protein modification; protein ubiquitination. In terms of biological role, accepts the ubiquitin from the E1 complex and catalyzes its covalent attachment to other proteins. This Arabidopsis thaliana (Mouse-ear cress) protein is Ubiquitin-conjugating enzyme E2 5 (UBC5).